We begin with the raw amino-acid sequence, 74 residues long: Translation initiation factor IF-1 (74 aa).

The S1-like domain occupies 1–73 (MAKKDDIIEF…TKGRITYRGK (73 aa)).

Belongs to the IF-1 family. As to quaternary structure, component of the 30S ribosomal translation pre-initiation complex which assembles on the 30S ribosome in the order IF-2 and IF-3, IF-1 and N-formylmethionyl-tRNA(fMet); mRNA recruitment can occur at any time during PIC assembly.

Its subcellular location is the cytoplasm. In terms of biological role, one of the essential components for the initiation of protein synthesis. Stabilizes the binding of IF-2 and IF-3 on the 30S subunit to which N-formylmethionyl-tRNA(fMet) subsequently binds. Helps modulate mRNA selection, yielding the 30S pre-initiation complex (PIC). Upon addition of the 50S ribosomal subunit IF-1, IF-2 and IF-3 are released leaving the mature 70S translation initiation complex. This is Translation initiation factor IF-1 from Psychrobacter sp. (strain PRwf-1).